A 1796-amino-acid polypeptide reads, in one-letter code: Non-reducing polyketide synthase nscA (1796 aa).

Residues 18–256 form an N-terminal acylcarrier protein transacylase domain (SAT) region; it reads DDLKDLFRRL…PLPVYDGLCH (239 aa). In terms of domain architecture, Ketosynthase family 3 (KS3) spans 392–825; sequence SSKLAIVGMA…GGNTTLLLED (434 aa). Active-site for beta-ketoacyl synthase activity residues include C565, H700, and H743. Positions 931–1251 are malonyl-CoA:ACP transacylase (MAT) domain; that stretch reads FTGQGAYYSG…SLVTLHLAGL (321 aa). Positions 1317–1636 are product template (PT) domain; the sequence is TSLVHQITAE…RLLMDRFFSP (320 aa). The interval 1321-1457 is N-terminal hotdog fold; that stretch reads HQITAETVEA…ATVRFEDPVA (137 aa). A PKS/mFAS DH domain is found at 1321 to 1631; the sequence is HQITAETVEA…FRRVPRLLMD (311 aa). The Proton acceptor; for dehydratase activity role is filled by H1353. The interval 1485 to 1631 is C-terminal hotdog fold; sequence ASRLSKPLAY…FRRVPRLLMD (147 aa). Catalysis depends on D1542, which acts as the Proton donor; for dehydratase activity. Positions 1688 to 1720 are disordered; the sequence is TPESTPPLAPSSESSTPKESPIATPPESERADP. Positions 1697–1708 are enriched in low complexity; that stretch reads PSSESSTPKESP. One can recognise a Carrier domain in the interval 1719–1796; the sequence is DPMDNMVSQC…EMTAWIEEYC (78 aa). S1756 carries the O-(pantetheine 4'-phosphoryl)serine modification.

Requires pantetheine 4'-phosphate as cofactor.

The protein operates within secondary metabolite biosynthesis. Its function is as follows. Non-reducing polyketide synthase; part of the gene cluster that mediates the biosynthesis of neosartoricin B, a prenylated anthracenone that probably exhibits T-cell antiproliferative activity, suggestive of a physiological role as an immunosuppressive agent. The non-reducing polyketide synthase nscA probably synthesizes and cyclizes the decaketide backbone. The hydrolase nscB then mediates the product release through hydrolysis followed by spontaneous decarboxylation. The prenyltransferase nscD catalyzes the addition of the dimethylallyl group to the aromatic C5. The FAD-dependent monooxygenase nscC is then responsible for the stereospecific hydroxylation at C2. Neosartoricin B can be converted into two additional compounds neosartoricins C and D. Neosartoricin C is a spirocyclic compound that is cyclized through the attack of C3 hydroxyl on C14, followed by dehydration. On the other hand, neosartoricin D is a further cyclized compound in which attack of C2 on C14 in neosartoricin C results in the formation of the acetal-containing dioxabicyclo-octanone ring. Both of these compounds are novel and possibly represent related metabolites of the gene cluster. The chain is Non-reducing polyketide synthase nscA from Arthroderma otae (strain ATCC MYA-4605 / CBS 113480) (Microsporum canis).